The sequence spans 105 residues: Large ribosomal subunit protein uL24 (105 aa).

Belongs to the universal ribosomal protein uL24 family. As to quaternary structure, part of the 50S ribosomal subunit.

Its function is as follows. One of two assembly initiator proteins, it binds directly to the 5'-end of the 23S rRNA, where it nucleates assembly of the 50S subunit. One of the proteins that surrounds the polypeptide exit tunnel on the outside of the subunit. The protein is Large ribosomal subunit protein uL24 of Saccharophagus degradans (strain 2-40 / ATCC 43961 / DSM 17024).